The chain runs to 121 residues: Basic phospholipase A2 homolog GodMT-II (121 aa).

Cystine bridges form between C26-C115, C28-C44, C43-C95, C49-C121, C50-C88, C57-C81, and C75-C86. Positions 105 to 117 are important for membrane-damaging activities in eukaryotes and bacteria; heparin-binding; the sequence is KNYKIYPKPLCKK.

It belongs to the phospholipase A2 family. Group II subfamily. K49 sub-subfamily. As to quaternary structure, monomer. In terms of tissue distribution, expressed by the venom gland.

The protein localises to the secreted. Its function is as follows. Snake venom phospholipase A2 homolog that lacks enzymatic activity but shows high myotoxic activities. In vivo, induces a mild edema when subcutaneously injected into mice foot pad. This chain is Basic phospholipase A2 homolog GodMT-II, found in Cerrophidion godmani (Porthidium godmani).